The primary structure comprises 1487 residues: Murinoglobulin-1 (1487 aa).

An N-terminal signal peptide occupies residues 1-24 (MKKNREAQLCLFSALLAFLPFASL). An intrachain disulfide couples Cys-48 to Cys-86. N-linked (GlcNAc...) asparagine glycosylation is found at Asn-55 and Asn-247. Cystine bridges form between Cys-251-Cys-283 and Cys-269-Cys-295. 4 N-linked (GlcNAc...) asparagine glycosylation sites follow: Asn-301, Asn-321, Asn-393, and Asn-508. 3 disulfide bridges follow: Cys-468/Cys-563, Cys-595/Cys-784, and Cys-643/Cys-689. Residues 686–745 (PTYCYEMNMVVLSAPAVESELSPRGGEFEMMPLGVNKSPLPKEPPRKDPPPKDPVIETIR) are bait region. 3 N-linked (GlcNAc...) asparagine glycosylation sites follow: Asn-760, Asn-787, and Asn-882. Intrachain disulfides connect Cys-860–Cys-896, Cys-934–Cys-1334, Cys-1092–Cys-1140, and Cys-1365–Cys-1480. The isoglutamyl cysteine thioester (Cys-Gln) cross-link spans 985-988 (CGEQ). Asn-1004 is a glycosylation site (N-linked (GlcNAc...) asparagine). N-linked (GlcNAc...) asparagine glycans are attached at residues Asn-1153, Asn-1324, and Asn-1437.

Belongs to the protease inhibitor I39 (alpha-2-macroglobulin) family. Monomer. Plasma.

It localises to the secreted. Functionally, a proteinase activates the inhibitor by specific proteolysis in the bait region, which, by an unknown mechanism leads to reaction at the cysteinyl-glutamyl internal thiol ester site and to a conformational change, whereby the proteinase is trapped and/or covalently bound to the inhibitor. While in the tetrameric proteinase inhibitors steric inhibition is sufficiently strong, monomeric forms need a covalent linkage between the activated glutamyl residue of the original thiol ester and a terminal amino group of a lysine or another nucleophilic group on the proteinase, for inhibition to be effective. The chain is Murinoglobulin-1 from Rattus norvegicus (Rat).